The sequence spans 150 residues: MGRFISVSFGLLVVFLSLSGIGADQECLPGWSFYEGHCYKVFSEYKNWVDAEQYCTEQENGGHLVSFHNREEVDFVVKLGYTILKADIVWIGLRDFWRECHWEWSNGAQLDYKGWSDEPNCFIAYTVGNKWLRRKCSSTQQFICKARVPH.

A signal peptide spans 1–23 (MGRFISVSFGLLVVFLSLSGIGA). 3 cysteine pairs are disulfide-bonded: C27–C38, C55–C144, and C121–C136. Residues 34 to 145 (YEGHCYKVFS…CSSTQQFICK (112 aa)) enclose the C-type lectin domain.

Belongs to the snaclec family. In terms of assembly, heterodimer; disulfide-linked. In terms of tissue distribution, expressed by the venom gland.

It is found in the secreted. Functionally, interferes with one step of hemostasis (modulation of platelet aggregation, or coagulation cascade, for example). The protein is Snaclec CTL-Eoc125 of Echis ocellatus (Ocellated saw-scaled viper).